A 219-amino-acid chain; its full sequence is MVQLTEETYLYDPNLLLKLDFHRSPANFKPFISAANPGEPWMKVRPLKDTDYDRGFLQLLSQLTHVGNVNRTQFLTRFSQMKASGDYFVTVIEDTRKNEIIGAASLVIERKFIHNCAVRGRLEDVVVNDTYRGKQLGKLIVVTVSLLAEELGCYKMSLDCKDKLIKFYESLGYVAIPGNSNSMTIRYDEGPTLKRNATSAGSSGTVGDSCQTVSLDFAS.

The N-acetyltransferase domain occupies 42–198; sequence MKVRPLKDTD…EGPTLKRNAT (157 aa). Substrate-binding positions include T64, 111 to 114, and 123 to 125; these read KFIH and EDV. 133 to 138 contacts acetyl-CoA; the sequence is GKQLGK. Residues 154–155 and R186 each bind substrate; that span reads YK.

Belongs to the acetyltransferase family. GNA1 subfamily.

The catalysed reaction is D-glucosamine 6-phosphate + acetyl-CoA = N-acetyl-D-glucosamine 6-phosphate + CoA + H(+). The protein operates within nucleotide-sugar biosynthesis; UDP-N-acetyl-alpha-D-glucosamine biosynthesis; N-acetyl-alpha-D-glucosamine 1-phosphate from alpha-D-glucosamine 6-phosphate (route I): step 1/2. This is Probable glucosamine 6-phosphate N-acetyltransferase from Drosophila melanogaster (Fruit fly).